The primary structure comprises 790 residues: Sodium- and chloride-dependent glycine transporter 2 (790 aa).

Residues 1 to 39 are disordered; that stretch reads MDYVNVVDGSKKTMNSPEGAAPGLIGATGITNPTPDNDL. Topologically, residues 1-192 are cytoplasmic; it reads MDYVNVVDGS…ARGNWSNKLD (192 aa). 3 helical membrane-spanning segments follow: residues 193-213, 220-240, and 264-284; these read FILS…FPYL, GAFL…IFYL, and GCGI…NIIM. Na(+)-binding residues include Gly199, Ala201, Val202, and Asn206. Residues 285–387 lie on the Extracellular side of the membrane; that stretch reads CYTIFYLFAS…GIEYPGEIRW (103 aa). A disulfide bridge connects residues Cys304 and Cys313. Asn336, Asn346, Asn351, and Asn357 each carry an N-linked (GlcNAc...) asparagine glycan. 3 helical membrane passes run 388-408, 427-447, and 463-483; these read PLVF…AKGI, VILL…WWFI, and AATQ…TLSS. Positions 470 and 502 each coordinate Na(+). Helical transmembrane passes span 504–524, 556–576, 597–617, 631–651, 672–692, and 708–728; these read ATSI…AHIL, WAII…FATI, LFTL…ITQG, SYSL…IYGL, ICWA…SFYQ, and MVMG…MFVI. Na(+) is bound by residues Leu567 and Asp570. At 729–790 the chain is on the cytoplasmic side; that stretch reads KMFLAPGTFI…PKDFELGTQC (62 aa).

It belongs to the sodium:neurotransmitter symporter (SNF) (TC 2.A.22) family. SLC6A5 subfamily. First expressed in late neurula stages in the anterior spinal cord, where expression intensifies through the tailbud stages, and by hatching, expression is seen in the hindbrain. During late hatching stages, expression extends along most of the length of the spinal cord, mildly intensifies in the hindbrain, and appears in localized regions of the lateral forebrain and medial midbrain. By the swimming tadpole stage, weak expression appears in the anterior hindbrain, with stronger expression in the posterior, postmitotic neurons.

It localises to the cell membrane. It carries out the reaction glycine(out) + chloride(out) + 3 Na(+)(out) = glycine(in) + chloride(in) + 3 Na(+)(in). Functionally, sodium- and chloride-dependent glycine transporter. Terminates the action of glycine by its high affinity sodium-dependent reuptake into presynaptic terminals. May be responsible for the termination of neurotransmission at strychnine-sensitive glycinergic synapses. The chain is Sodium- and chloride-dependent glycine transporter 2 from Xenopus laevis (African clawed frog).